Here is a 148-residue protein sequence, read N- to C-terminus: Ribonuclease H (148 aa).

Residues 1–142 enclose the RNase H type-1 domain; the sequence is MSDSVEIYTD…ADQLANRGVD (142 aa). Mg(2+)-binding residues include Asp10, Glu48, Asp70, and Asp134. The tract at residues 129-148 is disordered; that stretch reads GNERADQLANRGVDEVRAQR.

This sequence belongs to the RNase H family. As to quaternary structure, monomer. Requires Mg(2+) as cofactor.

The protein resides in the cytoplasm. The enzyme catalyses Endonucleolytic cleavage to 5'-phosphomonoester.. Its function is as follows. Endonuclease that specifically degrades the RNA of RNA-DNA hybrids. The sequence is that of Ribonuclease H from Pseudomonas entomophila (strain L48).